The chain runs to 335 residues: Fructose-1,6-bisphosphatase class 1 (335 aa).

The Mg(2+) site is built by Glu90, Asp113, Leu115, and Asp116. Residues 116-119 (DGSS), Asn209, Tyr242, and Lys272 each bind substrate. Glu278 lines the Mg(2+) pocket.

Belongs to the FBPase class 1 family. As to quaternary structure, homotetramer. It depends on Mg(2+) as a cofactor.

Its subcellular location is the cytoplasm. It catalyses the reaction beta-D-fructose 1,6-bisphosphate + H2O = beta-D-fructose 6-phosphate + phosphate. It functions in the pathway carbohydrate biosynthesis; gluconeogenesis. This is Fructose-1,6-bisphosphatase class 1 from Histophilus somni (strain 2336) (Haemophilus somnus).